The primary structure comprises 563 residues: Ataxin-10 homolog (563 aa).

Residue Thr-433 is modified to Phosphothreonine. Positions 544 to 563 (VSKEEDPGNENSEIISIDED) are disordered. Ser-559 carries the post-translational modification Phosphoserine.

This sequence belongs to the ataxin-10 family.

It is found in the cytoplasm. Its function is as follows. May play a role in the regulation of cytokinesis. This Saccharomyces cerevisiae (strain ATCC 204508 / S288c) (Baker's yeast) protein is Ataxin-10 homolog (CTR86).